Here is a 197-residue protein sequence, read N- to C-terminus: Orotate phosphoribosyltransferase (197 aa).

Residues Arg87, Lys91, His93, and 112–120 each bind 5-phospho-alpha-D-ribose 1-diphosphate; that span reads DDVATTGGS. Residues Thr116 and Arg144 each coordinate orotate.

It belongs to the purine/pyrimidine phosphoribosyltransferase family. PyrE subfamily. Homodimer. Requires Mg(2+) as cofactor.

The enzyme catalyses orotidine 5'-phosphate + diphosphate = orotate + 5-phospho-alpha-D-ribose 1-diphosphate. The protein operates within pyrimidine metabolism; UMP biosynthesis via de novo pathway; UMP from orotate: step 1/2. Functionally, catalyzes the transfer of a ribosyl phosphate group from 5-phosphoribose 1-diphosphate to orotate, leading to the formation of orotidine monophosphate (OMP). The sequence is that of Orotate phosphoribosyltransferase from Sulfolobus acidocaldarius (strain ATCC 33909 / DSM 639 / JCM 8929 / NBRC 15157 / NCIMB 11770).